We begin with the raw amino-acid sequence, 337 residues long: Inositol 2-dehydrogenase (337 aa).

It belongs to the Gfo/Idh/MocA family. Homotetramer.

It carries out the reaction myo-inositol + NAD(+) = scyllo-inosose + NADH + H(+). In terms of biological role, involved in the oxidation of myo-inositol (MI) to 2-keto-myo-inositol (2KMI or 2-inosose). The sequence is that of Inositol 2-dehydrogenase from Ralstonia nicotianae (strain ATCC BAA-1114 / GMI1000) (Ralstonia solanacearum).